The sequence spans 209 residues: Uracil phosphoribosyltransferase (209 aa).

5-phospho-alpha-D-ribose 1-diphosphate-binding positions include R77, R102, and 129-137 (DPMLATGSS). Residues I192 and 197-199 (GDA) each bind uracil. D198 lines the 5-phospho-alpha-D-ribose 1-diphosphate pocket.

It belongs to the UPRTase family. Requires Mg(2+) as cofactor.

It carries out the reaction UMP + diphosphate = 5-phospho-alpha-D-ribose 1-diphosphate + uracil. It participates in pyrimidine metabolism; UMP biosynthesis via salvage pathway; UMP from uracil: step 1/1. With respect to regulation, allosterically activated by GTP. Functionally, catalyzes the conversion of uracil and 5-phospho-alpha-D-ribose 1-diphosphate (PRPP) to UMP and diphosphate. This is Uracil phosphoribosyltransferase from Metamycoplasma hominis (Mycoplasma hominis).